We begin with the raw amino-acid sequence, 1070 residues long: Error-prone DNA polymerase (1070 aa).

It belongs to the DNA polymerase type-C family. DnaE2 subfamily.

It localises to the cytoplasm. It catalyses the reaction DNA(n) + a 2'-deoxyribonucleoside 5'-triphosphate = DNA(n+1) + diphosphate. DNA polymerase involved in damage-induced mutagenesis and translesion synthesis (TLS). It is not the major replicative DNA polymerase. The polypeptide is Error-prone DNA polymerase (Aromatoleum aromaticum (strain DSM 19018 / LMG 30748 / EbN1) (Azoarcus sp. (strain EbN1))).